A 161-amino-acid polypeptide reads, in one-letter code: UPF0225 protein HI_0277 (161 aa).

It belongs to the UPF0225 family.

The protein is UPF0225 protein HI_0277 of Haemophilus influenzae (strain ATCC 51907 / DSM 11121 / KW20 / Rd).